A 180-amino-acid polypeptide reads, in one-letter code: Translation initiation factor IF-3 (180 aa).

It belongs to the IF-3 family. In terms of assembly, monomer.

The protein resides in the cytoplasm. Its function is as follows. IF-3 binds to the 30S ribosomal subunit and shifts the equilibrium between 70S ribosomes and their 50S and 30S subunits in favor of the free subunits, thus enhancing the availability of 30S subunits on which protein synthesis initiation begins. The polypeptide is Translation initiation factor IF-3 (Mesoplasma florum (strain ATCC 33453 / NBRC 100688 / NCTC 11704 / L1) (Acholeplasma florum)).